Consider the following 311-residue polypeptide: MALPIIIDCDPGHDDAIALVLALASPELEVKAITSSAGNQTPEKTLRNVLRMLTLLKRPDIPVAGGAVKPLMRELIIADNVHGESGLDGPALPEPSFAPQSGTAVELMAKTLRESAQPVTIVSTGPQTNVALLLNSHPELHTKIARIVIMGGAMGLGNWTPAAEFNIYVDPEAAEIVFQSGIPVVMAGLDVTHKAQIHAADIERFRDIGNPISTIVAELLDFFFEYHKDEKWGFVGAPLHDPCTIAWLLKPEIFTTVERWVGVETKGKYTQGMTVVDYYFLTGNKPNATVMVDVDRQGFVDLLAERLQYYA.

H240 is an active-site residue.

This sequence belongs to the IUNH family. RihA subfamily.

Its function is as follows. Hydrolyzes cytidine or uridine to ribose and cytosine or uracil, respectively. The chain is Pyrimidine-specific ribonucleoside hydrolase RihA from Salmonella paratyphi C (strain RKS4594).